Consider the following 1336-residue polypeptide: Immunoglobulin superfamily member 1 (1336 aa).

A signal peptide spans 1–28; it reads MTLDRPGEGATMLKTFTVLLFCIRMSLG. Topologically, residues 29–518 are extracellular; that stretch reads MTSIVMDPQP…GYLTWNYVLN (490 aa). Ig-like C2-type domains are found at residues 38–122, 137–222, 226–312, 321–408, and 419–500; these read PELW…KVLE, QAET…LVVA, PKPT…SDVL, PKTW…PSHN, and PKPS…HRSE. Asparagine 53 carries N-linked (GlcNAc...) asparagine glycosylation. Cysteine 58 and cysteine 106 are joined by a disulfide. A disulfide bond links cysteine 248 and cysteine 296. 3 N-linked (GlcNAc...) asparagine glycosylation sites follow: asparagine 338, asparagine 374, and asparagine 381. Intrachain disulfides connect cysteine 343–cysteine 392 and cysteine 441–cysteine 484. The chain crosses the membrane as a helical span at residues 519–539; sequence EAIRLSLIMQLVALLLVVLWI. Topologically, residues 540–559 are cytoplasmic; it reads RWKCRRLRIREAWLLGTAQG. Residues 560–580 traverse the membrane as a helical segment; that stretch reads VTMLFIVTALLCCGLCNGVLI. At 581–1336 the chain is on the extracellular side; that stretch reads EETEIVMPTP…RISVELPVPI (756 aa). 7 Ig-like C2-type domains span residues 589–677, 686–760, 777–869, 873–958, 965–1060, 1065–1150, and 1161–1242; these read TPKP…ALEL, PVIS…RPFK, PKPF…LVVT, PKPT…YLSM, TDTF…ELLV, PKPS…NHSD, and PKPS…EPSD. 8 N-linked (GlcNAc...) asparagine glycosylation sites follow: asparagine 607, asparagine 747, asparagine 798, asparagine 846, asparagine 939, asparagine 986, asparagine 1027, and asparagine 1082. Cysteines 703 and 750 form a disulfide. 2 cysteine pairs are disulfide-bonded: cysteine 799–cysteine 849 and cysteine 895–cysteine 942. Cysteine 1087 and cysteine 1134 are disulfide-bonded. Residues asparagine 1147 and asparagine 1223 are each glycosylated (N-linked (GlcNAc...) asparagine). Cysteine 1183 and cysteine 1226 are disulfide-bonded. The disordered stretch occupies residues 1308-1336; sequence CNQEGEPGTPANSPSSTSQRISVELPVPI. Polar residues predominate over residues 1317 to 1328; that stretch reads PANSPSSTSQRI.

As to quaternary structure, interacts with INHA. In PubMed:12385827 does not interact with INHA; standard receptor binding assay. Interacts with ACVR1B; the interaction appears to be ligand-dependent as it is diminished by inhibin B and activin A. Interacts with ACVR2A, ACVR2B, ACVRL1 and BMPR1B. Interacts with HECTD1. Highly expressed in pancreas, testis and fetal liver. Moderately expressed in heart, prostate and small intestine. Expressed at very low levels in brain, thymus, ovary, colon, fetal lung and fetal kidney. Expressed in muscle. Isoform 3 is expressed in pituitary gland.

The protein resides in the membrane. It localises to the secreted. In terms of biological role, seems to be a coreceptor in inhibin signaling, but seems not to be a high-affinity inhibin receptor. Antagonizes activin A signaling in the presence or absence of inhibin B. Necessary to mediate a specific antagonistic effect of inhibin B on activin-stimulated transcription. This Homo sapiens (Human) protein is Immunoglobulin superfamily member 1 (IGSF1).